The chain runs to 261 residues: Cytochrome c oxidase subunit 3 (261 aa).

Residues 1 to 15 (MTHQTHAYHMVNPSP) are Mitochondrial matrix-facing. The helical transmembrane segment at 16–34 (WPLTGALSALLMTSGLAMW) threads the bilayer. Residues 35-40 (FHFNST) are Mitochondrial intermembrane-facing. A helical membrane pass occupies residues 41–66 (LLLAMGLLTNILTMYQWWRDIIREST). Over 67 to 72 (FQGHHT) the chain is Mitochondrial matrix. The helical transmembrane segment at 73–105 (SIVQKGLRYGMILFIISEVFFFSGFFWAFYHSS) threads the bilayer. At 106–128 (LAPTPELGGCWPPTGIHPLNPLE) the chain is on the mitochondrial intermembrane side. A helical membrane pass occupies residues 129 to 152 (VPLLNTSVLLASGVSITWAHHSLM). Over 153–155 (EGN) the chain is Mitochondrial matrix. Residues 156-183 (RKNMLQGLFITISLGVYFTLLQASEYYE) form a helical membrane-spanning segment. The Mitochondrial intermembrane portion of the chain corresponds to 184–190 (ASFTISD). The helical transmembrane segment at 191-223 (GVYGSTFFVATGFHGLHVIIGSTFLIVCFLRQL) threads the bilayer. Topologically, residues 224-232 (KFHFTSSHH) are mitochondrial matrix. A helical membrane pass occupies residues 233-256 (FGFEAAAWYWHFVDVVWLFLYVSI). Residues 257-261 (YWWGS) lie on the Mitochondrial intermembrane side of the membrane.

The protein belongs to the cytochrome c oxidase subunit 3 family. As to quaternary structure, component of the cytochrome c oxidase (complex IV, CIV), a multisubunit enzyme composed of 14 subunits. The complex is composed of a catalytic core of 3 subunits MT-CO1, MT-CO2 and MT-CO3, encoded in the mitochondrial DNA, and 11 supernumerary subunits COX4I, COX5A, COX5B, COX6A, COX6B, COX6C, COX7A, COX7B, COX7C, COX8 and NDUFA4, which are encoded in the nuclear genome. The complex exists as a monomer or a dimer and forms supercomplexes (SCs) in the inner mitochondrial membrane with NADH-ubiquinone oxidoreductase (complex I, CI) and ubiquinol-cytochrome c oxidoreductase (cytochrome b-c1 complex, complex III, CIII), resulting in different assemblies (supercomplex SCI(1)III(2)IV(1) and megacomplex MCI(2)III(2)IV(2)).

The protein resides in the mitochondrion inner membrane. It carries out the reaction 4 Fe(II)-[cytochrome c] + O2 + 8 H(+)(in) = 4 Fe(III)-[cytochrome c] + 2 H2O + 4 H(+)(out). Component of the cytochrome c oxidase, the last enzyme in the mitochondrial electron transport chain which drives oxidative phosphorylation. The respiratory chain contains 3 multisubunit complexes succinate dehydrogenase (complex II, CII), ubiquinol-cytochrome c oxidoreductase (cytochrome b-c1 complex, complex III, CIII) and cytochrome c oxidase (complex IV, CIV), that cooperate to transfer electrons derived from NADH and succinate to molecular oxygen, creating an electrochemical gradient over the inner membrane that drives transmembrane transport and the ATP synthase. Cytochrome c oxidase is the component of the respiratory chain that catalyzes the reduction of oxygen to water. Electrons originating from reduced cytochrome c in the intermembrane space (IMS) are transferred via the dinuclear copper A center (CU(A)) of subunit 2 and heme A of subunit 1 to the active site in subunit 1, a binuclear center (BNC) formed by heme A3 and copper B (CU(B)). The BNC reduces molecular oxygen to 2 water molecules using 4 electrons from cytochrome c in the IMS and 4 protons from the mitochondrial matrix. The polypeptide is Cytochrome c oxidase subunit 3 (MT-CO3) (Equus caballus (Horse)).